We begin with the raw amino-acid sequence, 820 residues long: Cation/H(+) antiporter 17 (820 aa).

12 consecutive transmembrane segments (helical) span residues 30 to 50 (LPLLILQICIVLLLTRLLAFL), 58 to 75 (RVIAEIVGGILLGPSALG), 90 to 110 (LTVLDTLANLGLIFFLFLVGL), 124 to 144 (ALSIALAGITLPFVLGIGTSF), 159 to 179 (FLVFMGVALSITAFPVLARIL), 192 to 212 (IALSAAAVNDVAAWILLALAV), 222 to 242 (LTSLWVFLSGCGFVLFCIFVV), 276 to 296 (FVTDFIGIHALFGAFVIGVIF), 313 to 333 (LVSGLFLPLYFVSSGLKTNVA), 342 to 362 (GLLVLVIFNACFGKIIGTVLV), 374 to 394 (LALGFLMNTKGLVELIVLNIG), and 404 to 424 (IFAIMVLMAIFTTFMTTPLVL). S817 and S819 each carry phosphoserine.

The protein belongs to the monovalent cation:proton antiporter 2 (CPA2) transporter (TC 2.A.37) family. CHX (TC 2.A.37.4) subfamily. Predominantly expressed in epidermal and cortical cells of mature roots but also barely detected in leaves.

The protein resides in the membrane. Operates as a K(+)/H(+) antiporter that controls K(+) acquisition and homeostasis. In Arabidopsis thaliana (Mouse-ear cress), this protein is Cation/H(+) antiporter 17 (CHX17).